Reading from the N-terminus, the 244-residue chain is MALFRGMWGVLRTLGRTGVEMCAGCGGRIPSPVSLICIPKCFSSLGNYPKKPMSSYLRFSTEQLPKFKAKHPDAKVSELIRKIAAMWRELPEAEKKVYEADFKAEWKVYKEAVSKYKEQLTPSQLMGLEKEARQKRLKKKAQIKRRELILLGKPKRPRSAYNIYVSESFQEAKDESAQGKLKLVNQAWKNLSHDEKQAYIQLAKDDRIRYDNEMKSWEEQMAEVGRSDLIRRSVKRPPGDISEN.

A mitochondrion-targeting transit peptide spans 1–42 (MALFRGMWGVLRTLGRTGVEMCAGCGGRIPSPVSLICIPKCF). Positions 49–117 (PKKPMSSYLR…VYKEAVSKYK (69 aa)) form a DNA-binding region, HMG box 1. 3 positions are modified to phosphoserine; by PKA: serine 54, serine 55, and serine 60. Lysine 66 carries the post-translational modification N6-succinyllysine. Phosphothreonine is present on threonine 121. A DNA-binding region (HMG box 2) is located at residues 154-218 (PKRPRSAYNI…RYDNEMKSWE (65 aa)). Residue serine 159 is modified to Phosphoserine; by PKA. The residue at position 192 (serine 192) is a Phosphoserine. The interval 221-244 (MAEVGRSDLIRRSVKRPPGDISEN) is disordered.

As to quaternary structure, monomer; binds DNA as a monomer. Homodimer. Component of the mitochondrial transcription initiation complex, composed at least of TFB2M, TFAM and POLRMT. In this complex TFAM recruits POLRMT to the promoter whereas TFB2M induces structural changes in POLRMT to enable promoter opening and trapping of the DNA non-template strand. Upon metabolic stress, forms a complex composed of FOXO3, SIRT3, TFAM and POLRMT. Interacts with TFB1M and TFB2M. Interacts with CLPX; this enhances DNA-binding. Post-translationally, phosphorylation by PKA within the HMG box 1 impairs DNA binding and promotes degradation by the AAA+ Lon protease. In terms of tissue distribution, the mitochondrial isoform is widely expressed while the nuclear isoform is testis-specific.

The protein resides in the mitochondrion. The protein localises to the mitochondrion matrix. It is found in the mitochondrion nucleoid. Its subcellular location is the nucleus. Its function is as follows. Binds to the mitochondrial light strand promoter and functions in mitochondrial transcription regulation. Component of the mitochondrial transcription initiation complex, composed at least of TFB2M, TFAM and POLRMT that is required for basal transcription of mitochondrial DNA. In this complex, TFAM recruits POLRMT to a specific promoter whereas TFB2M induces structural changes in POLRMT to enable promoter opening and trapping of the DNA non-template strand. Required for accurate and efficient promoter recognition by the mitochondrial RNA polymerase. Promotes transcription initiation from the HSP1 and the light strand promoter by binding immediately upstream of transcriptional start sites. Is able to unwind DNA. Bends the mitochondrial light strand promoter DNA into a U-turn shape via its HMG boxes. Required for maintenance of normal levels of mitochondrial DNA. May play a role in organizing and compacting mitochondrial DNA. May also function as a transcriptional activator or may have a structural role in the compaction of nuclear DNA during spermatogenesis. The polypeptide is Transcription factor A, mitochondrial (Rattus norvegicus (Rat)).